An 867-amino-acid chain; its full sequence is Leucine--tRNA ligase (867 aa).

The 'HIGH' region signature appears at 57–67 (PYPSGTLHMGH). The disordered stretch occupies residues 308 to 327 (SQDERTSDDQPKRGVPTGAV). A compositionally biased stretch (basic and acidic residues) spans 309-319 (QDERTSDDQPK). Residues 631–635 (KMSKS) carry the 'KMSKS' region motif. Lys634 contributes to the ATP binding site.

It belongs to the class-I aminoacyl-tRNA synthetase family.

Its subcellular location is the cytoplasm. It catalyses the reaction tRNA(Leu) + L-leucine + ATP = L-leucyl-tRNA(Leu) + AMP + diphosphate. The sequence is that of Leucine--tRNA ligase from Synechococcus sp. (strain CC9311).